Consider the following 316-residue polypeptide: Pantothenate kinase (316 aa).

An ATP-binding site is contributed by 95-102; sequence GSVAVGKS.

It belongs to the prokaryotic pantothenate kinase family.

It localises to the cytoplasm. It carries out the reaction (R)-pantothenate + ATP = (R)-4'-phosphopantothenate + ADP + H(+). The protein operates within cofactor biosynthesis; coenzyme A biosynthesis; CoA from (R)-pantothenate: step 1/5. This Yersinia enterocolitica serotype O:8 / biotype 1B (strain NCTC 13174 / 8081) protein is Pantothenate kinase.